We begin with the raw amino-acid sequence, 358 residues long: Pseudouridylate synthase RPUSD4, mitochondrial (358 aa).

Residues 1–12 (MRHAREVTFARL) constitute a mitochondrion transit peptide.

This sequence belongs to the pseudouridine synthase RluA family.

It localises to the mitochondrion matrix. Its subcellular location is the nucleus. The protein resides in the cytoplasm. The enzyme catalyses uridine in 5S rRNA = pseudouridine in 5S rRNA. It carries out the reaction a uridine in tRNA = a pseudouridine in tRNA. The catalysed reaction is a uridine in mRNA = a pseudouridine in mRNA. Catalyzes uridine to pseudouridine isomerization (pseudouridylation) of different mitochondrial RNA substrates. Acts on position 1397 in 16S mitochondrial ribosomal RNA (16S mt-rRNA). This modification is required for the assembly of 16S mt-rRNA into a functional mitochondrial ribosome. Acts on position 39 in mitochondrial tRNA(Phe). Also catalyzes pseudouridylation of mRNAs in nucleus: acts as a regulator of pre-mRNA splicing by mediating pseudouridylation of pre-mRNAs at locations associated with alternatively spliced regions. Pseudouridylation of pre-mRNAs near splice sites directly regulates mRNA splicing and mRNA 3'-end processing. The polypeptide is Pseudouridylate synthase RPUSD4, mitochondrial (Danio rerio (Zebrafish)).